Consider the following 152-residue polypeptide: SUZ RNA-binding domain-containing (152 aa).

At methionine 1 the chain carries N-acetylmethionine. Disordered stretches follow at residues threonine 30–lysine 86 and arginine 99–arginine 152. Residues serine 37, serine 39, and serine 51 each carry the phosphoserine modification. Residues lysine 42–serine 107 enclose the SUZ domain. Over residues proline 66–serine 79 the composition is skewed to polar residues. 2 positions are modified to phosphoserine: serine 105 and serine 107. The SUZ-C domain maps to glutamate 111–arginine 152. The span at glutamate 113–arginine 130 shows a compositional bias: basic and acidic residues.

It belongs to the SZRD1 family.

The polypeptide is SUZ RNA-binding domain-containing (SZRD1) (Bos taurus (Bovine)).